Consider the following 310-residue polypeptide: Methionyl-tRNA formyltransferase (310 aa).

Position 109-112 (109-112 (SLLP)) interacts with (6S)-5,6,7,8-tetrahydrofolate.

Belongs to the Fmt family.

The catalysed reaction is L-methionyl-tRNA(fMet) + (6R)-10-formyltetrahydrofolate = N-formyl-L-methionyl-tRNA(fMet) + (6S)-5,6,7,8-tetrahydrofolate + H(+). In terms of biological role, attaches a formyl group to the free amino group of methionyl-tRNA(fMet). The formyl group appears to play a dual role in the initiator identity of N-formylmethionyl-tRNA by promoting its recognition by IF2 and preventing the misappropriation of this tRNA by the elongation apparatus. The protein is Methionyl-tRNA formyltransferase of Staphylococcus epidermidis (strain ATCC 12228 / FDA PCI 1200).